The primary structure comprises 154 residues: Deoxyuridine 5'-triphosphate nucleotidohydrolase (154 aa).

Substrate-binding positions include 64-66, Asn-77, 81-83, and Lys-91; these read RSG and TVD. The tract at residues 135 to 154 is disordered; it reads LADTTRGDGGHGSSGGHASL. Gly residues predominate over residues 144–154; sequence GHGSSGGHASL.

It belongs to the dUTPase family. Homotrimer. Mg(2+) serves as cofactor.

The catalysed reaction is dUTP + H2O = dUMP + diphosphate + H(+). The protein operates within pyrimidine metabolism; dUMP biosynthesis; dUMP from dCTP (dUTP route): step 2/2. Functionally, this enzyme is involved in nucleotide metabolism: it produces dUMP, the immediate precursor of thymidine nucleotides and it decreases the intracellular concentration of dUTP so that uracil cannot be incorporated into DNA. This Mycolicibacterium vanbaalenii (strain DSM 7251 / JCM 13017 / BCRC 16820 / KCTC 9966 / NRRL B-24157 / PYR-1) (Mycobacterium vanbaalenii) protein is Deoxyuridine 5'-triphosphate nucleotidohydrolase.